Reading from the N-terminus, the 256-residue chain is Thiazole synthase (256 aa).

Residue K95 is the Schiff-base intermediate with DXP of the active site. Residues G156, 182 to 183 (AG), and 204 to 205 (NT) each bind 1-deoxy-D-xylulose 5-phosphate.

It belongs to the ThiG family. Homotetramer. Forms heterodimers with either ThiH or ThiS.

It is found in the cytoplasm. The enzyme catalyses [ThiS sulfur-carrier protein]-C-terminal-Gly-aminoethanethioate + 2-iminoacetate + 1-deoxy-D-xylulose 5-phosphate = [ThiS sulfur-carrier protein]-C-terminal Gly-Gly + 2-[(2R,5Z)-2-carboxy-4-methylthiazol-5(2H)-ylidene]ethyl phosphate + 2 H2O + H(+). It functions in the pathway cofactor biosynthesis; thiamine diphosphate biosynthesis. Catalyzes the rearrangement of 1-deoxy-D-xylulose 5-phosphate (DXP) to produce the thiazole phosphate moiety of thiamine. Sulfur is provided by the thiocarboxylate moiety of the carrier protein ThiS. In vitro, sulfur can be provided by H(2)S. This Escherichia coli O7:K1 (strain IAI39 / ExPEC) protein is Thiazole synthase.